The sequence spans 396 residues: Diphosphomevalonate decarboxylase (396 aa).

Residues 19–22 (YWGK), Arg-74, 153–158 (SGSACR), and Thr-209 contribute to the (R)-5-diphosphomevalonate site.

It belongs to the diphosphomevalonate decarboxylase family. In terms of assembly, homodimer.

It catalyses the reaction (R)-5-diphosphomevalonate + ATP = isopentenyl diphosphate + ADP + phosphate + CO2. It participates in isoprenoid biosynthesis; isopentenyl diphosphate biosynthesis via mevalonate pathway; isopentenyl diphosphate from (R)-mevalonate: step 3/3. In terms of biological role, diphosphomevalonate decarboxylase; part of the second module of ergosterol biosynthesis pathway that includes the middle steps of the pathway. MVD1/ERG19 converts diphosphomevalonate into isopentenyl diphosphate. The second module is carried out in the vacuole and involves the formation of farnesyl diphosphate, which is also an important intermediate in the biosynthesis of ubiquinone, dolichol, heme and prenylated proteins. Activity by the mevalonate kinase ERG12 first converts mevalonate into 5-phosphomevalonate. 5-phosphomevalonate is then further converted to 5-diphosphomevalonate by the phosphomevalonate kinase ERG8. The diphosphomevalonate decarboxylase MVD1/ERG19 then produces isopentenyl diphosphate. The isopentenyl-diphosphate delta-isomerase IDI1 then catalyzes the 1,3-allylic rearrangement of the homoallylic substrate isopentenyl (IPP) to its highly electrophilic allylic isomer, dimethylallyl diphosphate (DMAPP). Finally the farnesyl diphosphate synthase ERG20 catalyzes the sequential condensation of isopentenyl pyrophosphate with dimethylallyl pyrophosphate, and then with the resultant geranylpyrophosphate to the ultimate product farnesyl pyrophosphate. The chain is Diphosphomevalonate decarboxylase from Saccharomyces cerevisiae (strain ATCC 204508 / S288c) (Baker's yeast).